We begin with the raw amino-acid sequence, 337 residues long: Zinc finger protein 488 (337 aa).

A compositionally biased stretch (polar residues) spans 1 to 10 (MAAGTSTLLS). Disordered stretches follow at residues 1–32 (MAAG…SVEK), 55–83 (SDTA…PRLD), and 146–179 (SAWP…MLLA). The tract at residues 69-184 (TELSLPTAPN…PMLLAGGSAE (116 aa)) is important for transcriptional repression activity. C2H2-type zinc fingers lie at residues 272–299 (NWCA…KREH) and 314–336 (LTCP…MASH). The Nuclear localization signal signature appears at 295 to 302 (HKREHVGP).

The protein belongs to the krueppel C2H2-type zinc-finger protein family. Interacts with OLIG2.

It is found in the nucleus. Its function is as follows. Transcriptional repressor. Plays a role in oligodendrocyte differentiation, together with OLIG2. Mediates Notch signaling-activated formation of oligodendrocyte precursors. Promotes differentiation of adult neural stem progenitor cells (NSPCs) into mature oligodendrocytes and contributes to remyelination following nerve injury. In Mus musculus (Mouse), this protein is Zinc finger protein 488 (Znf488).